Reading from the N-terminus, the 97-residue chain is Cobalt transport protein CbiN (97 aa).

2 helical membrane-spanning segments follow: residues 6 to 26 (VLMI…YSGL) and 68 to 88 (SLLF…FFGY).

This sequence belongs to the CbiN family. As to quaternary structure, forms an energy-coupling factor (ECF) transporter complex composed of an ATP-binding protein (A component, CbiO), a transmembrane protein (T component, CbiQ) and 2 possible substrate-capture proteins (S components, CbiM and CbiN) of unknown stoichimetry.

It is found in the cell membrane. The protein operates within cofactor biosynthesis; adenosylcobalamin biosynthesis. Part of the energy-coupling factor (ECF) transporter complex CbiMNOQ involved in cobalt import. In Methanococcus maripaludis (strain C7 / ATCC BAA-1331), this protein is Cobalt transport protein CbiN.